Reading from the N-terminus, the 492-residue chain is Phytoene desaturase (lycopene-forming) (492 aa).

5–38 (TVIGAGFGGLALAIRLQAAGIPVLLLEQRDKPGG) contacts FAD.

This sequence belongs to the carotenoid/retinoid oxidoreductase family. It depends on FAD as a cofactor.

The protein localises to the cell membrane. The catalysed reaction is 15-cis-phytoene + 4 A = all-trans-lycopene + 4 AH2. It participates in carotenoid biosynthesis; lycopene biosynthesis. With respect to regulation, inhibited by NAD and NADP. Its function is as follows. Converts 15-cis-phytoene into all-trans-lycopene via the intermediary of all-trans-phytofluene, all-trans-zeta-carotene and all-trans-neurosporene, by the introduction of four double bonds. The sequence is that of Phytoene desaturase (lycopene-forming) (crtI) from Pantoea ananas (Erwinia uredovora).